The chain runs to 486 residues: MKKLLRLFFPLSLRVRFLLATAAVVLVLSLAYGMVALIGYSVSFDKTTFRLLRGESNLFYTLAQWENNKLHVELPENIDKQSPTMTLIYDENGQLLWAQRDVPWLMKMIQPDWLKSNGFHEIEADVNDTSLLLSGDHSIQQQLQEVREDDDDAEMTHSVAVNVYPATSRMPKLTIVVVDTIPVELKSSYMVWSWFIYVLSANLLLVIPLLWVAAWWSLRPIEALAKEVRELEEHNRELLNPATTRELTSLVRNLNRLLKSERERYDKYRTTLTDLTHSLKTPLAVLQSTLRSLRSEKMSVSDAEPVMLEQISRISQQIGYYLHRASMRGGTLLSRELHPVAPLLDNLTSALNKVYQRKGVNISLDISPEISFVGEQNDFVEVMGNVLDNACKYCLEFVEISARQTDEHLYIVVEDDGPGIPLSKREVIFDRGQRVDTLRPGQGVGLAVAREITEQYEGKIVAGESMLGGARMEVIFGRQHSAPKDE.

Residues 1–16 (MKKLLRLFFPLSLRVR) are Cytoplasmic-facing. Residues 17–37 (FLLATAAVVLVLSLAYGMVAL) traverse the membrane as a helical segment. Residues 38 to 194 (IGYSVSFDKT…LKSSYMVWSW (157 aa)) lie on the Periplasmic side of the membrane. Asp151 and Asp152 together coordinate a divalent metal cation. A helical membrane pass occupies residues 195–215 (FIYVLSANLLLVIPLLWVAAW). The 52-residue stretch at 215–266 (WWSLRPIEALAKEVRELEEHNRELLNPATTRELTSLVRNLNRLLKSERERYD) folds into the HAMP domain. Residues 216-486 (WSLRPIEALA…GRQHSAPKDE (271 aa)) lie on the Cytoplasmic side of the membrane. The 207-residue stretch at 274-480 (DLTHSLKTPL…RMEVIFGRQH (207 aa)) folds into the Histidine kinase domain. His277 is modified (phosphohistidine; by autocatalysis). Mg(2+) is bound at residue Asn385. Residues 385-393 (NVLDNACKY), 415-420 (DDGPGI), and 434-446 (RVDT…GVGL) each bind ATP. Gln442 serves as a coordination point for Mg(2+).

As to quaternary structure, homodimer.

It localises to the cell inner membrane. It catalyses the reaction ATP + protein L-histidine = ADP + protein N-phospho-L-histidine.. In terms of biological role, member of the two-component regulatory system PhoP/PhoQ involved in virulence and adaptation to low Mg(2+) environments. In low periplasmic Mg(2+), PhoQ functions as a membrane-associated protein kinase that undergoes autophosphorylation and subsequently transfers the phosphate to PhoP, which results in the expression of PhoP-activated genes (PAG) and repression of PhoP-repressed genes (PRG). In high periplasmic Mg(2+), acts as a protein phosphatase that dephosphorylates phospho-PhoP, which results in the repression of PAG and may lead to expression of some PRG. Necessary for resistance to killing by polymorphonuclear leukocytes (PMNs) and cationic antimicrobial peptides (CAMP) they produce. This is Virulence sensor protein PhoQ (phoQ) from Shigella flexneri.